The chain runs to 437 residues: Sperm-associated antigen 4 protein (437 aa).

Residues Met1 to Ser12 are compositionally biased toward low complexity. The segment at Met1–Gln88 is disordered. Composition is skewed to polar residues over residues Asn19 to Ser31 and Trp72 to Gln88. 2 helical membrane passes run Phe135–Val155 and Phe166–Leu186. Residues Lys197–Leu244 are a coiled coil. The SUN domain occupies Gly265 to Thr425.

As to quaternary structure, homodimer. Interacts with ODF1. May associate with microtubules. Interacts with SUN3 and SYNE1; suggesting the formation of a spermatogenesis-specific LINC complex; a SUN domain-based heterotrimer with SUN3 may associate with SYNE1. Interacts with SEPT12 and LMNB1; during spermatogenesis. Predominantly epressed in testis. Expressed in ejaculated spermatozoa (at protein level).

It localises to the membrane. Its subcellular location is the cytoplasm. It is found in the cytoskeleton. The protein localises to the flagellum axoneme. The protein resides in the nucleus envelope. It localises to the nucleus inner membrane. Involved in spermatogenesis. Required for sperm head formation but not required to establish and maintain general polarity of the sperm head. Required for anchoring and organization of the manchette. Required for targeting of SUN3 and probably SYNE1 through a probable SUN1:SYNE3 LINC complex to the nuclear envelope and involved in accurate posterior sperm head localization of the complex. May anchor SUN3 the nuclear envelope. Involved in maintenance of the nuclear envelope integrity. May assist the organization and assembly of outer dense fibers (ODFs), a specific structure of the sperm tail. The polypeptide is Sperm-associated antigen 4 protein (SPAG4) (Homo sapiens (Human)).